Consider the following 399-residue polypeptide: Acetate kinase (399 aa).

Residue Asn7 participates in Mg(2+) binding. Lys14 contributes to the ATP binding site. A substrate-binding site is contributed by Arg91. The active-site Proton donor/acceptor is Asp148. Residues His208–Gly212, Asp283–Arg285, and Gly331–Asn335 each bind ATP. Position 384 (Glu384) interacts with Mg(2+).

This sequence belongs to the acetokinase family. Homodimer. It depends on Mg(2+) as a cofactor. Mn(2+) is required as a cofactor.

The protein resides in the cytoplasm. It catalyses the reaction acetate + ATP = acetyl phosphate + ADP. The protein operates within metabolic intermediate biosynthesis; acetyl-CoA biosynthesis; acetyl-CoA from acetate: step 1/2. In terms of biological role, catalyzes the formation of acetyl phosphate from acetate and ATP. Can also catalyze the reverse reaction. The sequence is that of Acetate kinase from Desulfitobacterium hafniense (strain DSM 10664 / DCB-2).